The chain runs to 123 residues: Large ribosomal subunit protein bL12 (123 aa).

It belongs to the bacterial ribosomal protein bL12 family. Homodimer. Part of the ribosomal stalk of the 50S ribosomal subunit. Forms a multimeric L10(L12)X complex, where L10 forms an elongated spine to which 2 to 4 L12 dimers bind in a sequential fashion. Binds GTP-bound translation factors.

Its function is as follows. Forms part of the ribosomal stalk which helps the ribosome interact with GTP-bound translation factors. Is thus essential for accurate translation. The chain is Large ribosomal subunit protein bL12 from Dehalococcoides mccartyi (strain ATCC BAA-2100 / JCM 16839 / KCTC 5957 / BAV1).